A 342-amino-acid chain; its full sequence is Dihydroorotase (342 aa).

Residues His-13 and His-15 each contribute to the Zn(2+) site. Substrate-binding positions include 15–17 and Asn-41; that span reads HLR. 3 residues coordinate Zn(2+): Lys-98, His-135, and His-173. Lys-98 carries the post-translational modification N6-carboxylysine. Substrate is bound at residue His-135. Leu-218 is a binding site for substrate. Asp-246 lines the Zn(2+) pocket. Asp-246 is a catalytic residue. His-250 and Ala-262 together coordinate substrate.

This sequence belongs to the metallo-dependent hydrolases superfamily. DHOase family. Class II DHOase subfamily. As to quaternary structure, homodimer. Requires Zn(2+) as cofactor.

The catalysed reaction is (S)-dihydroorotate + H2O = N-carbamoyl-L-aspartate + H(+). The protein operates within pyrimidine metabolism; UMP biosynthesis via de novo pathway; (S)-dihydroorotate from bicarbonate: step 3/3. In terms of biological role, catalyzes the reversible cyclization of carbamoyl aspartate to dihydroorotate. The protein is Dihydroorotase of Vibrio cholerae serotype O1 (strain ATCC 39315 / El Tor Inaba N16961).